Consider the following 319-residue polypeptide: Acetyl esterase (319 aa).

The Involved in the stabilization of the negatively charged intermediate by the formation of the oxyanion hole signature appears at 91 to 93 (HGG). Catalysis depends on residues serine 165, aspartate 262, and histidine 292.

This sequence belongs to the 'GDXG' lipolytic enzyme family. Homodimer. Interacts with MalT and MelA.

The protein resides in the cytoplasm. In terms of biological role, displays esterase activity towards short chain fatty esters (acyl chain length of up to 8 carbons). Able to hydrolyze triacetylglycerol (triacetin) and tributyrylglycerol (tributyrin), but not trioleylglycerol (triolein) or cholesterol oleate. Negatively regulates MalT activity by antagonizing maltotriose binding. Inhibits MelA galactosidase activity. The sequence is that of Acetyl esterase from Shigella boydii serotype 18 (strain CDC 3083-94 / BS512).